We begin with the raw amino-acid sequence, 486 residues long: N-succinylglutamate 5-semialdehyde dehydrogenase (486 aa).

220–225 (GSSRTG) contributes to the NAD(+) binding site. Catalysis depends on residues Glu243 and Cys277.

This sequence belongs to the aldehyde dehydrogenase family. AstD subfamily.

It carries out the reaction N-succinyl-L-glutamate 5-semialdehyde + NAD(+) + H2O = N-succinyl-L-glutamate + NADH + 2 H(+). The protein operates within amino-acid degradation; L-arginine degradation via AST pathway; L-glutamate and succinate from L-arginine: step 4/5. Catalyzes the NAD-dependent reduction of succinylglutamate semialdehyde into succinylglutamate. In Shewanella sp. (strain W3-18-1), this protein is N-succinylglutamate 5-semialdehyde dehydrogenase.